A 136-amino-acid chain; its full sequence is UPF0216 protein PH0358 (136 aa).

This sequence belongs to the UPF0216 family.

The chain is UPF0216 protein PH0358 from Pyrococcus horikoshii (strain ATCC 700860 / DSM 12428 / JCM 9974 / NBRC 100139 / OT-3).